The sequence spans 223 residues: Deoxyribose-phosphate aldolase 1 (223 aa).

The Proton donor/acceptor role is filled by Asp-91. Lys-154 (schiff-base intermediate with acetaldehyde) is an active-site residue. Lys-183 functions as the Proton donor/acceptor in the catalytic mechanism.

This sequence belongs to the DeoC/FbaB aldolase family. DeoC type 1 subfamily.

The protein localises to the cytoplasm. It carries out the reaction 2-deoxy-D-ribose 5-phosphate = D-glyceraldehyde 3-phosphate + acetaldehyde. Its pathway is carbohydrate degradation; 2-deoxy-D-ribose 1-phosphate degradation; D-glyceraldehyde 3-phosphate and acetaldehyde from 2-deoxy-alpha-D-ribose 1-phosphate: step 2/2. Functionally, catalyzes a reversible aldol reaction between acetaldehyde and D-glyceraldehyde 3-phosphate to generate 2-deoxy-D-ribose 5-phosphate. In Bacillus licheniformis (strain ATCC 14580 / DSM 13 / JCM 2505 / CCUG 7422 / NBRC 12200 / NCIMB 9375 / NCTC 10341 / NRRL NRS-1264 / Gibson 46), this protein is Deoxyribose-phosphate aldolase 1.